We begin with the raw amino-acid sequence, 271 residues long: Aminoglycoside N(3)-acetyltransferase III (271 aa).

CoA contacts are provided by H31, A32, S33, V34, and K35. A 2-deoxystreptamine antibiotic is bound by residues Y64, D72, and E102. CoA-binding residues include S104, V105, and F109. A 2-deoxystreptamine antibiotic is bound by residues E123, Y146, and D170. CoA contacts are provided by T171 and T173. A 2-deoxystreptamine antibiotic is bound by residues H176, T212, G213, and F221.

The protein belongs to the antibiotic N-acetyltransferase family. As to quaternary structure, homodimer.

The enzyme catalyses a 2-deoxystreptamine antibiotic + acetyl-CoA = an N(3)-acetyl-2-deoxystreptamine antibiotic + CoA + H(+). Resistance to antibiotics containing the 2-deoxy-streptamine ring including dibekacin, gentamicin, kanamycin, sisomicin, tobramycin and neomycin, but not to amikacin or netilmicin. Acetylates a broad range of both 4,5- and 4,6-disubstituted aminoglycosides, including neomycin, paromomycin, ribostamycin, sisomicin, gentamicin, tobramycin and kanamycin, with no preference of one disubstitution over the other. Acetylates sisomicin and kanamycin most and least efficiently, respectively. Does not modify plazomicin. The sequence is that of Aminoglycoside N(3)-acetyltransferase III from Pseudomonas aeruginosa.